The following is a 179-amino-acid chain: Alkyl hydroperoxide reductase AhpD (179 aa).

The Proton donor role is filled by cysteine 130. Residues cysteine 130 and cysteine 133 are joined by a disulfide bond. The active-site Cysteine sulfenic acid (-SOH) intermediate is the cysteine 133.

Belongs to the AhpD family. In terms of assembly, homotrimer.

It carries out the reaction N(6)-[(R)-dihydrolipoyl]-L-lysyl-[lipoyl-carrier protein] + a hydroperoxide = N(6)-[(R)-lipoyl]-L-lysyl-[lipoyl-carrier protein] + an alcohol + H2O. In terms of biological role, antioxidant protein with alkyl hydroperoxidase activity. Required for the reduction of the AhpC active site cysteine residues and for the regeneration of the AhpC enzyme activity. This chain is Alkyl hydroperoxide reductase AhpD, found in Rhodococcus erythropolis (strain PR4 / NBRC 100887).